Consider the following 892-residue polypeptide: UPF0182 protein Gura_0902 (892 aa).

7 helical membrane passes run 6–26, 50–70, 103–123, 158–178, 201–221, 248–268, and 271–291; these read FIII…LINF, VGAG…NLHF, LGIL…AMQW, MLKI…GAVY, LAVL…LNGC, ILTV…WQGA, and LALL…KAYP.

This sequence belongs to the UPF0182 family.

The protein localises to the cell membrane. The chain is UPF0182 protein Gura_0902 from Geotalea uraniireducens (strain Rf4) (Geobacter uraniireducens).